Here is a 55-residue protein sequence, read N- to C-terminus: Large ribosomal subunit protein bL33 (55 aa).

This sequence belongs to the bacterial ribosomal protein bL33 family.

The polypeptide is Large ribosomal subunit protein bL33 (Paenarthrobacter aurescens (strain TC1)).